The primary structure comprises 306 residues: tRNA pseudouridine synthase B (306 aa).

Asp-48 acts as the Nucleophile in catalysis.

Belongs to the pseudouridine synthase TruB family. Type 1 subfamily.

The enzyme catalyses uridine(55) in tRNA = pseudouridine(55) in tRNA. Functionally, responsible for synthesis of pseudouridine from uracil-55 in the psi GC loop of transfer RNAs. This Haemophilus influenzae (strain 86-028NP) protein is tRNA pseudouridine synthase B.